A 237-amino-acid chain; its full sequence is Phosphoribosylaminoimidazole-succinocarboxamide synthase (237 aa).

This sequence belongs to the SAICAR synthetase family.

The catalysed reaction is 5-amino-1-(5-phospho-D-ribosyl)imidazole-4-carboxylate + L-aspartate + ATP = (2S)-2-[5-amino-1-(5-phospho-beta-D-ribosyl)imidazole-4-carboxamido]succinate + ADP + phosphate + 2 H(+). It participates in purine metabolism; IMP biosynthesis via de novo pathway; 5-amino-1-(5-phospho-D-ribosyl)imidazole-4-carboxamide from 5-amino-1-(5-phospho-D-ribosyl)imidazole-4-carboxylate: step 1/2. The chain is Phosphoribosylaminoimidazole-succinocarboxamide synthase from Yersinia pseudotuberculosis serotype O:1b (strain IP 31758).